Consider the following 121-residue polypeptide: Large ribosomal subunit protein uL14 (121 aa).

This sequence belongs to the universal ribosomal protein uL14 family. In terms of assembly, part of the 50S ribosomal subunit. Forms a cluster with proteins L3 and L19. In the 70S ribosome, L14 and L19 interact and together make contacts with the 16S rRNA in bridges B5 and B8.

In terms of biological role, binds to 23S rRNA. Forms part of two intersubunit bridges in the 70S ribosome. The chain is Large ribosomal subunit protein uL14 from Legionella pneumophila (strain Corby).